The sequence spans 417 residues: Serine hydroxymethyltransferase (417 aa).

(6S)-5,6,7,8-tetrahydrofolate contacts are provided by residues Leu121 and 125–127 (GHL). Lys229 is modified (N6-(pyridoxal phosphate)lysine). 355 to 357 (SPF) serves as a coordination point for (6S)-5,6,7,8-tetrahydrofolate.

The protein belongs to the SHMT family. Homodimer. The cofactor is pyridoxal 5'-phosphate.

The protein resides in the cytoplasm. It carries out the reaction (6R)-5,10-methylene-5,6,7,8-tetrahydrofolate + glycine + H2O = (6S)-5,6,7,8-tetrahydrofolate + L-serine. It functions in the pathway one-carbon metabolism; tetrahydrofolate interconversion. Its pathway is amino-acid biosynthesis; glycine biosynthesis; glycine from L-serine: step 1/1. Functionally, catalyzes the reversible interconversion of serine and glycine with tetrahydrofolate (THF) serving as the one-carbon carrier. This reaction serves as the major source of one-carbon groups required for the biosynthesis of purines, thymidylate, methionine, and other important biomolecules. Also exhibits THF-independent aldolase activity toward beta-hydroxyamino acids, producing glycine and aldehydes, via a retro-aldol mechanism. In Citrobacter koseri (strain ATCC BAA-895 / CDC 4225-83 / SGSC4696), this protein is Serine hydroxymethyltransferase.